A 202-amino-acid chain; its full sequence is Transcription factor IBH1 (202 aa).

Residues M1–N16 show a composition bias toward pro residues. Positions M1–R33 are disordered. Positions T136–L185 constitute a bHLH domain.

Belongs to the bHLH protein family. As to quaternary structure, interacts with ILI1.

Its function is as follows. Atypical and probable non DNA-binding bHLH transcription factor that acts as a negative regulator of cell elongation and plant development. Binds the transcription factor ILI1 and forms a heterodimer of antagonistic bHLH transcription factors that function downstream of BZR1 to mediate brassinosteroid regulation of cell elongation and lamina inclination. The chain is Transcription factor IBH1 (IBH1) from Oryza sativa subsp. indica (Rice).